The following is a 70-amino-acid chain: MKVYCLLLVLLVGLVSQAQGQLDKKCQTMCTMEYLPVCGSDGTTYPNKCTLTSTACVNQMDITVLHNGEC.

Residues 1-20 (MKVYCLLLVLLVGLVSQAQG) form the signal peptide. Residues 21-70 (QLDKKCQTMCTMEYLPVCGSDGTTYPNKCTLTSTACVNQMDITVLHNGEC) form the Kazal-like domain. 3 disulfides stabilise this stretch: Cys-26-Cys-56, Cys-30-Cys-49, and Cys-38-Cys-70.

It belongs to the conopeptide P-like superfamily. Expressed by the venom duct.

The protein resides in the secreted. Functionally, acts as a neurotoxin by inhibiting an ion channel. May also act as a serine protease inhibitor, since it possess the kazal serine protease inhibitor signature. This chain is Turripeptide Ici9.2, found in Iotyrris cingulifera (Sea snail).